The sequence spans 197 residues: Small ribosomal subunit protein uS4B (197 aa).

Residues Cys-88–Phe-151 form the S4 RNA-binding domain.

It belongs to the universal ribosomal protein uS4 family. As to quaternary structure, part of the 30S ribosomal subunit. Contacts protein S5. The interaction surface between S4 and S5 is involved in control of translational fidelity.

Functionally, one of the primary rRNA binding proteins, it binds directly to 16S rRNA where it nucleates assembly of the body of the 30S subunit. With S5 and S12 plays an important role in translational accuracy. The sequence is that of Small ribosomal subunit protein uS4B from Clostridium botulinum (strain Hall / ATCC 3502 / NCTC 13319 / Type A).